The primary structure comprises 424 residues: Proline--tRNA ligase (424 aa).

The protein belongs to the class-II aminoacyl-tRNA synthetase family. ProS type 2 subfamily. Homodimer.

It is found in the cytoplasm. It catalyses the reaction tRNA(Pro) + L-proline + ATP = L-prolyl-tRNA(Pro) + AMP + diphosphate. Functionally, catalyzes the attachment of proline to tRNA(Pro) in a two-step reaction: proline is first activated by ATP to form Pro-AMP and then transferred to the acceptor end of tRNA(Pro). The sequence is that of Proline--tRNA ligase from Ehrlichia chaffeensis (strain ATCC CRL-10679 / Arkansas).